The primary structure comprises 40 residues: Large ribosomal subunit protein bL36A (40 aa).

Belongs to the bacterial ribosomal protein bL36 family.

This chain is Large ribosomal subunit protein bL36A, found in Paenarthrobacter aurescens (strain TC1).